A 345-amino-acid polypeptide reads, in one-letter code: uncharacterized protein (345 aa).

It localises to the plastid. The protein localises to the chloroplast. This is an uncharacterized protein from Chlamydomonas moewusii (Chlamydomonas eugametos).